The chain runs to 499 residues: Maturase K (499 aa).

Belongs to the intron maturase 2 family. MatK subfamily.

It localises to the plastid. It is found in the chloroplast. Functionally, usually encoded in the trnK tRNA gene intron. Probably assists in splicing its own and other chloroplast group II introns. This is Maturase K from Camellia sasanqua (Christmas camellia).